A 378-amino-acid polypeptide reads, in one-letter code: Mevalonate kinase (378 aa).

ATP is bound by residues lysine 10, serine 138, and 143 to 149 (GSGLGSS). Mg(2+) contacts are provided by serine 149 and glutamate 193. The active-site Proton acceptor is the aspartate 204.

Belongs to the GHMP kinase family. Mevalonate kinase subfamily. The cofactor is Mg(2+).

Its subcellular location is the cytoplasm. The enzyme catalyses (R)-mevalonate + ATP = (R)-5-phosphomevalonate + ADP + H(+). It functions in the pathway isoprenoid biosynthesis; isopentenyl diphosphate biosynthesis via mevalonate pathway; isopentenyl diphosphate from (R)-mevalonate: step 1/3. With respect to regulation, its activity is inhibited in vitro by geranyl pyrophosphate (GPP) and farnesyl pyrophosphate (FPP) that bind competitively at the ATP-binding site on the enzyme. Functionally, catalyzes the phosphorylation of mevalonate to mevalonate 5-phosphate, a key step in isoprenoid and cholesterol biosynthesis. This is Mevalonate kinase from Arabidopsis thaliana (Mouse-ear cress).